The sequence spans 214 residues: Nascent polypeptide-associated complex subunit alpha (214 aa).

Disordered stretches follow at residues 1–57 (MSNP…NEKK) and 119–179 (ASAA…EDKD). Residues 22–38 (AEDEGSDSSDSEGEGEV) are compositionally biased toward acidic residues. The region spanning 52–117 (SRNEKKARKS…AKIEDLNSQA (66 aa)) is the NAC-A/B domain. Positions 119 to 128 (ASAAAQLAAQ) are enriched in low complexity. Over residues 129–159 (ESHDHAGHDHSGHDHSHDHGKGKAVDTGDEK) the composition is skewed to basic and acidic residues. Acidic residues predominate over residues 160–171 (KEEEEDDTEEVD). The UBA domain maps to 175 to 214 (LEDKDIELVMTQASVSRNKAVKALKENDNDIVNSIMALSI).

It belongs to the NAC-alpha family. Part of the nascent polypeptide-associated complex (NAC), consisting of EGD2 and EGD1. NAC associates with ribosomes via EGD1.

It is found in the cytoplasm. The protein localises to the nucleus. Its function is as follows. Component of the nascent polypeptide-associated complex (NAC), a dynamic component of the ribosomal exit tunnel, protecting the emerging polypeptides from interaction with other cytoplasmic proteins to ensure appropriate nascent protein targeting. The NAC complex also promotes mitochondrial protein import by enhancing productive ribosome interactions with the outer mitochondrial membrane and blocks the inappropriate interaction of ribosomes translating non-secretory nascent polypeptides with translocation sites in the membrane of the endoplasmic reticulum. EGD2 may also be involved in transcription regulation. In Sclerotinia sclerotiorum (strain ATCC 18683 / 1980 / Ss-1) (White mold), this protein is Nascent polypeptide-associated complex subunit alpha (egd2).